The following is a 121-amino-acid chain: Basic phospholipase A2 caudoxin (121 aa).

7 disulfides stabilise this stretch: Cys-25/Cys-114, Cys-27/Cys-43, Cys-42/Cys-94, Cys-48/Cys-121, Cys-49/Cys-87, Cys-56/Cys-80, and Cys-74/Cys-85. Tyr-26, Gly-28, and Gly-30 together coordinate Ca(2+). The active site involves His-46. Ca(2+) is bound at residue Asp-47. Asp-88 is an active-site residue.

It belongs to the phospholipase A2 family. Group II subfamily. D49 sub-subfamily. As to quaternary structure, monomer. Ca(2+) serves as cofactor. As to expression, expressed by the venom gland.

The protein localises to the secreted. It carries out the reaction a 1,2-diacyl-sn-glycero-3-phosphocholine + H2O = a 1-acyl-sn-glycero-3-phosphocholine + a fatty acid + H(+). Snake venom phospholipase A2 (PLA2) that shows anticoagulant activity and presynaptic neurotoxicity. Acts as an anticoagulant toxin by inhibiting prothrombinase complex formation. Shows about 50% of the prothrombinase complex inhibition compared to CM-IV of N.nigricollis venom. Acts as a neurotoxin by inhibiting neuromuscular transmission by blocking acetylcholine release from the nerve termini. PLA2 catalyzes the calcium-dependent hydrolysis of the 2-acyl groups in 3-sn-phosphoglycerides. In Bitis caudalis (Horned adder), this protein is Basic phospholipase A2 caudoxin.